The following is a 945-amino-acid chain: Soluble guanylate cyclase gcy-33 (945 aa).

His-104 serves as a coordination point for heme. Positions 388 to 413 (SEVLTEMTREISEAKKTARTLLTQMM) form a coiled coil. One can recognise a Guanylate cyclase domain in the interval 437–567 (SIGFIRVCDF…DTVNTASRME (131 aa)). Disordered regions lie at residues 639–679 (KEAE…LSGS) and 706–930 (QDEN…KCED). Over residues 661 to 679 (SLGESIDSSSSRRGSLSGS) the composition is skewed to low complexity. The span at 711 to 720 (RPPTWSASHS) shows a compositional bias: polar residues. Over residues 721–731 (QDIRKPRKTES) the composition is skewed to basic and acidic residues. Residues 732–744 (KITLNSRLSSSDL) show a composition bias toward polar residues. Basic and acidic residues-rich tracts occupy residues 750–759 (ETSKDSDGET) and 766–804 (ELKE…DHVS). Positions 763-802 (TSSELKEVNRIREEALAQEKEEERTTKEENQKIEEVGEDH) form a coiled coil. Positions 817-828 (GDNNISFSQMPS) are enriched in polar residues. Basic and acidic residues predominate over residues 851–861 (ISKKKLEKEDS). The segment covering 862–884 (NSSMSSLDERTTVSAKPTTTRRL) has biased composition (polar residues). The span at 886 to 896 (NQKDLEKEKKR) shows a compositional bias: basic and acidic residues. Residues 898 to 911 (SMAGSSVTSSSAHS) are compositionally biased toward low complexity. Basic and acidic residues predominate over residues 916–930 (SKKDTRDKSRCKCED).

The protein belongs to the adenylyl cyclase class-4/guanylyl cyclase family. As to quaternary structure, heterodimer; with other soluble guanylate cyclases. It depends on heme as a cofactor. As to expression, expressed in BAG sensory neuron.

It is found in the cytoplasm. The enzyme catalyses GTP = 3',5'-cyclic GMP + diphosphate. May be regulated by molecular oxygen. Probably not activated by nitric oxide (NO). Functionally, synthesizes cyclic GMP (cGMP) from GTP. May be involved in sensitivity to quinine by regulating egl-4 activity through the production of cGMP. This is Soluble guanylate cyclase gcy-33 (gcy-33) from Caenorhabditis elegans.